Reading from the N-terminus, the 335-residue chain is Abasic site processing protein HMCES (335 aa).

Cys-2 acts as the Nucleophile in catalysis. Position 2 is a thiazolidine linkage to a ring-opened DNA abasic site (Cys-2). Positions 24-39 (QGGRKWPNWRDGDSDK) are enriched in basic and acidic residues. The disordered stretch occupies residues 24–51 (QGGRKWPNWRDGDSDKYQPSYNKSPQSN). The segment covering 40 to 51 (YQPSYNKSPQSN) has biased composition (polar residues). Glu-129 is a catalytic residue. A disordered region spans residues 284–335 (LQNKSPKKEESHSIQSPKLSQFGAPPKKTSAGLMQQWLKKEDGEPSPKRAKK). Basic and acidic residues predominate over residues 321–335 (LKKEDGEPSPKRAKK).

The protein belongs to the SOS response-associated peptidase family. In terms of processing, ubiquitination of the hmces DNA-protein cross-link by rfwd3 may promotes its degradation.

Its subcellular location is the chromosome. Formation and reversal of DNA-protein cross-link depends on DNA context. Catalyzes formation of the thiazolidine linkage in presence of abasic sites in single-stranded DNA. Mediates the reversal of the thiazolidine cross-link in presence of double stranded DNA. Its function is as follows. Sensor of abasic sites in single-stranded DNA (ssDNA) required to preserve genome integrity by promoting error-free repair of abasic sites. Acts as an enzyme that recognizes and binds abasic sites in ssDNA at replication forks and chemically modifies the lesion by forming a covalent cross-link with DNA: forms a stable thiazolidine linkage between a ring-opened abasic site and the alpha-amino and sulfhydryl substituents of its N-terminal catalytic cysteine residue. The hmces DNA-protein cross-link is then either reversed or degraded. Hmces is able to catalyze the reversal of its thiazolidine cross-link and cycle between a cross-link and a non-cross-linked state depending on DNA context: mediates self-reversal of the thiazolidine cross-link in double stranded DNA, allowing apex1 to initiate downstream repair of abasic sites. The hmces DNA-protein cross-link can also be degraded by the sprtn metalloprotease following unfolding by the brip1/fancj helicase. Promotes error-free repair of abasic sites by protecting abasic sites from translesion synthesis (TLS) polymerases and endonucleases that are error-prone and would generate mutations and double-strand breaks. Acts as a protease: mediates autocatalytic processing of its N-terminal methionine in order to expose the catalytic cysteine. The hmces DNA-protein cross-link is then either reversed or degraded. According to a model, the HMCES DNA-protein cross-link. The chain is Abasic site processing protein HMCES from Xenopus tropicalis (Western clawed frog).